A 145-amino-acid chain; its full sequence is MRTTPMANASTIERKWLVVDAAGKTLGRLSSEVAAILRGKHKPTYTPHVDTGDHVIIINAEKIELTGKKLTDKIYYRHTQHPGGLKSRTALEMRTNYPEKMLELAIKGMLPKGSLGRQMFKKLNVYRGSEHPHEAQKPEVYELRG.

It belongs to the universal ribosomal protein uL13 family. As to quaternary structure, part of the 50S ribosomal subunit. Binds to Obg (AC P20964).

Its function is as follows. This protein is one of the early assembly proteins of the 50S ribosomal subunit, although it is not seen to bind rRNA by itself. It is important during the early stages of 50S assembly. The polypeptide is Large ribosomal subunit protein uL13 (Bacillus subtilis (strain 168)).